The sequence spans 180 residues: Insulin-like growth factor 2 (180 aa).

An N-terminal signal peptide occupies residues 1-24; that stretch reads MGIPVGKSMLVLLISLAFALCCIA. The segment at 25-52 is b; it reads AYGPGETLCGGELVDTLQFVCSDRGFYF. Disulfide bonds link Cys33-Cys71, Cys45-Cys84, and Cys70-Cys75. The c stretch occupies residues 53–64; sequence SRPSSRANRRSR. Positions 65-85 are a; sequence GIVEECCFRSCDLALLETYCA. The interval 86–91 is d; it reads TPAKSE. Positions 92-180 are cleaved as a propeptide — e peptide; sequence RDVSTSQAVL…ASSEMSSNHQ (89 aa). The segment at 157–180 is disordered; sequence PLIVLPPKDPAHGGASSEMSSNHQ.

This sequence belongs to the insulin family. Interacts with MYORG; this interaction is required for IGF2 secretion. Interacts with integrins ITGAV:ITGB3 and ITGA6:ITGB4; integrin-binding is required for IGF2 signaling. Interacts with IGFBP2. Proteolytically processed by PCSK4, proIGF2 is cleaved at Arg-128 and Arg-92 to generate big-IGF2 and mature IGF2. In terms of tissue distribution, expressed in the heart, blood serum, kidney and skeletal muscle including the tibialis anterior muscle.

Its subcellular location is the secreted. Functionally, the insulin-like growth factors possess growth-promoting activity. Major fetal growth hormone in mammals. Plays a key role in regulating fetoplacental development. IGF2 is influenced by placental lactogen. Also involved in tissue differentiation. In adults, involved in glucose metabolism in adipose tissue, skeletal muscle and liver. Acts as a ligand for integrin which is required for IGF2 signaling. Positively regulates myogenic transcription factor MYOD1 function by facilitating the recruitment of transcriptional coactivators, thereby controlling muscle terminal differentiation. Inhibits myoblast differentiation and modulates metabolism via increasing the mitochondrial respiration rate. Its function is as follows. Preptin undergoes glucose-mediated co-secretion with insulin, and acts as a physiological amplifier of glucose-mediated insulin secretion. Exhibits osteogenic properties by increasing osteoblast mitogenic activity through phosphoactivation of MAPK1 and MAPK3. In Mus musculus (Mouse), this protein is Insulin-like growth factor 2.